The following is a 474-amino-acid chain: Dihydrolipoyl dehydrogenase (474 aa).

FAD-binding positions include 36 to 45 (ERYNTLGGVC), K54, and G117. C45 and C50 are joined by a disulfide. Residues 182-186 (GGGII) and E205 contribute to the NAD(+) site. K220 carries the post-translational modification N6-acetyllysine. NAD(+) contacts are provided by residues V238 and 270–273 (AIGR). 2 residues coordinate FAD: D313 and A321. The active-site Proton acceptor is the H445.

Belongs to the class-I pyridine nucleotide-disulfide oxidoreductase family. As to quaternary structure, homodimer. FAD serves as cofactor.

It is found in the cytoplasm. The catalysed reaction is N(6)-[(R)-dihydrolipoyl]-L-lysyl-[protein] + NAD(+) = N(6)-[(R)-lipoyl]-L-lysyl-[protein] + NADH + H(+). Its function is as follows. Lipoamide dehydrogenase is a component of the glycine cleavage system as well as of the alpha-ketoacid dehydrogenase complexes. The sequence is that of Dihydrolipoyl dehydrogenase (lpdA) from Shigella flexneri.